The primary structure comprises 1092 residues: MTNTKYYPEVNSNADFAGLEREILKFWQDNNIFQKSIDDRNGELEFIFYDGPPFANGLPHYGHLLTGFIKDVYARYQTIKGKKVERRFGWDCHGLPAEMQSEKELGISGRLAIANFGIEKFNAHCRASVMKYANDWEEYVTRQARWVNFKNSYKTMDKNFMESVLWAFKELYNKGLLYESMRVMPYSWACETPLSNFETRLDNSYRERADKAVTVSFVLSHPVATTTGSFKEYRILAWTTTPWTLPSNLALAVGSDIDYALVPKNDVCYIIAAYSVSKYAKELGLSGEENFEIIKGSALQGLNYKSLFDYFENHPNSFKIFAGDFVVEGDGTGVVHMAPGFGEDDQILCESKGIELVCPVDNSGKFTKEIPDLEGLQVFDANDKIIIKLKEQGNWLKTEQYIHNYPHCWRTDTPLIYKAVPSWYVKVTQFKDRMVELNQQINWIPFHVKDNLFGKWLENARDWSISRNRFWGTPLPVWKSDDPKYPRIDVYGSIEELEKDFGVKVTDLHRPFIDELTRPNPDDPTGKSTMRRIEDVFDCWFESGSMPYGQAHYPFENKEWFEDHFPADFIVEYSAQTRGWFYTLMVLSTALFDRPPFLNCICHGIILDSTGQKLSKRLNNYADPLELFDKYGSDALRVTMLSSNVVKGQELLIDKDGKMVFDTLRLFIKPIWNAYHFFTMYANTDSLKGKLNFSSKNVLDVYILSKLKIAVQKIEESLDNFDTQTAYHAVSEFFEVLNNWYIRRSRARFWKSEKDTDKQNAYNTLYSCLDTMAIAMSALVPMISEAIYKGLHHCEERNDTALSGKSNVIVRKDTSLDKAISGVSHKIATALSVPCNDAISVHLCNYPTLSDFEINHELVATMDNVLDICSNSLFIRSTENIRVRQPLASIAIISKHNNNLKDFEDLIKDEINVKAVIYRDDLENYASKKLSINFPMLGKRLPHKMKEIIAASKKGEWEAIAGGLAICGETLNSDEYKLVLEPYSHIKGAASFENNSSLLILDLELTPELIEEGYARDIVRFIQQARKDADFSITDRILIEIISEFNLSKIIDNYGDFIKEQTLGEFAKNFTPDYVSKVELENHQIQLKVKKS.

Positions 53–63 (PFANGLPHYGH) match the 'HIGH' region motif. Residues 613–617 (KLSKR) carry the 'KMSKS' region motif. Lysine 616 contributes to the ATP binding site.

Belongs to the class-I aminoacyl-tRNA synthetase family. IleS type 2 subfamily. In terms of assembly, monomer. Requires Zn(2+) as cofactor.

It localises to the cytoplasm. It catalyses the reaction tRNA(Ile) + L-isoleucine + ATP = L-isoleucyl-tRNA(Ile) + AMP + diphosphate. Catalyzes the attachment of isoleucine to tRNA(Ile). As IleRS can inadvertently accommodate and process structurally similar amino acids such as valine, to avoid such errors it has two additional distinct tRNA(Ile)-dependent editing activities. One activity is designated as 'pretransfer' editing and involves the hydrolysis of activated Val-AMP. The other activity is designated 'posttransfer' editing and involves deacylation of mischarged Val-tRNA(Ile). The sequence is that of Isoleucine--tRNA ligase from Rickettsia africae (strain ESF-5).